The chain runs to 874 residues: Cellulose synthase catalytic subunit [UDP-forming] (874 aa).

Transmembrane regions (helical) follow at residues 30–50 (SPFSAALGCLWTILAWIVFPL), 151–171 (ILGVIVTFSLILALICITQPF), 173–193 (PLSQFIFLLLLWGVALLVRRM), and 230–250 (LVCGLILLFAETYAWIVLVLG). The segment at 271 to 364 (QWPTVDIFVP…FVAIFDCDHV (94 aa)) is catalytic subdomain A. The active site involves aspartate 313. Aspartate 360 and aspartate 362 together coordinate substrate. The catalytic subdomain B stretch occupies residues 441 to 501 (KPLDEIGGIA…GQRIRWARGM (61 aa)). Aspartate 457 is an active-site residue. Transmembrane regions (helical) follow at residues 525–545 (LNAMFHFLSGIPRLIFLTAPL), 547–567 (FLLLHAYIIYAPALMIALFVI), 592–612 (IYETVLAWYIAPPTLVALINP), 634–654 (VISRPYIFLVLLNLLGVAAGV), and 668–688 (VIVSLVWVFYNLVILGGAVAV). Residues 694–790 (QVRRAHRVEI…QHIDFVQCTF (97 aa)) form the PilZ domain. A helical membrane pass occupies residues 833 to 853 (SVKVIFRSLTALIAWIVSFIP).

The protein belongs to the glycosyltransferase 2 family. Mg(2+) serves as cofactor.

The protein localises to the cell inner membrane. It carries out the reaction [(1-&gt;4)-beta-D-glucosyl](n) + UDP-alpha-D-glucose = [(1-&gt;4)-beta-D-glucosyl](n+1) + UDP + H(+). The protein operates within glycan metabolism; bacterial cellulose biosynthesis. With respect to regulation, activated by bis-(3'-5') cyclic diguanylic acid (c-di-GMP). Catalytic subunit of cellulose synthase. It polymerizes uridine 5'-diphosphate glucose to cellulose, which is produced as an extracellular component for mechanical and chemical protection at the onset of the stationary phase, when the cells exhibit multicellular behavior (rdar morphotype). Coexpression of cellulose and thin aggregative fimbriae leads to a hydrophobic network with tightly packed cells embedded in a highly inert matrix. This chain is Cellulose synthase catalytic subunit [UDP-forming] (bcsA), found in Salmonella typhimurium (strain LT2 / SGSC1412 / ATCC 700720).